A 384-amino-acid chain; its full sequence is MSSVPAPREYFLDSIRAWLMLLGIPFHISLIYSTHSWHVNSATPSWWLTLFNDFIHAFRMQVFFVISGYFSYMLFLRYPLKRWWKVRVERVGIPMLTAIPLLTLPQFILLQYVKEKTENWPTLSAYEKYNTLAWELISHLWFLLVLVILTTVSIGIFTWFQKRQETSKPRPAAISLVRLSLIFFLLGMAYAAIRRIIFIVYPAILSDGMFNFIVMQTLFYVPFFILGALAFIHPDLKARFTTPSRGCTLGAAVAFIAYLLNQRYGSGDAWMYETESVITMVMGLWMVNVVFSLGHRLLNFQSARVTYFVNASLFIYLVHHPLTLFFGAYITPHISSNLIGFLCGLIFVMGIALILYEIHLRIPLLKFLFSGKPPVKQESRAAIG.

10 helical membrane-spanning segments follow: residues 17-37 (AWLMLLGIPFHISLIYSTHSW), 54-74 (FIHAFRMQVFFVISGYFSYML), 91-111 (VGIPMLTAIPLLTLPQFILLQ), 140-160 (LWFLLVLVILTTVSIGIFTWF), 173-193 (AISLVRLSLIFFLLGMAYAAI), 212-232 (FIVMQTLFYVPFFILGALAFI), 240-260 (FTTPSRGCTLGAAVAFIAYLL), 274-294 (TESVITMVMGLWMVNVVFSLG), 311-331 (ASLFIYLVHHPLTLFFGAYIT), and 338-358 (LIGFLCGLIFVMGIALILYEI).

It belongs to the acyltransferase 3 family. OpgC subfamily.

It is found in the cell membrane. It functions in the pathway glycan metabolism; osmoregulated periplasmic glucan (OPG) biosynthesis. In terms of biological role, necessary for the succinyl substitution of periplasmic glucans. Could catalyze the transfer of succinyl residues from the cytoplasmic side of the membrane to the nascent glucan backbones on the periplasmic side of the membrane. The protein is Glucans biosynthesis protein C of Salmonella choleraesuis (strain SC-B67).